A 175-amino-acid polypeptide reads, in one-letter code: Ribosome maturation factor RimM (175 aa).

A PRC barrel domain is found at 97-175; the sequence is EGEFYWHQLE…RMVVDWDPEF (79 aa).

It belongs to the RimM family. In terms of assembly, binds ribosomal protein uS19.

Its subcellular location is the cytoplasm. In terms of biological role, an accessory protein needed during the final step in the assembly of 30S ribosomal subunit, possibly for assembly of the head region. Essential for efficient processing of 16S rRNA. May be needed both before and after RbfA during the maturation of 16S rRNA. It has affinity for free ribosomal 30S subunits but not for 70S ribosomes. The protein is Ribosome maturation factor RimM of Marinobacter nauticus (strain ATCC 700491 / DSM 11845 / VT8) (Marinobacter aquaeolei).